The chain runs to 1359 residues: DNA-directed RNA polymerase subunit beta (1359 aa).

Belongs to the RNA polymerase beta chain family. As to quaternary structure, the RNAP catalytic core consists of 2 alpha, 1 beta, 1 beta' and 1 omega subunit. When a sigma factor is associated with the core the holoenzyme is formed, which can initiate transcription.

The enzyme catalyses RNA(n) + a ribonucleoside 5'-triphosphate = RNA(n+1) + diphosphate. Functionally, DNA-dependent RNA polymerase catalyzes the transcription of DNA into RNA using the four ribonucleoside triphosphates as substrates. In Nitrosococcus oceani (strain ATCC 19707 / BCRC 17464 / JCM 30415 / NCIMB 11848 / C-107), this protein is DNA-directed RNA polymerase subunit beta.